Reading from the N-terminus, the 156-residue chain is NADH-ubiquinone oxidoreductase chain 6 (156 aa).

5 helical membrane passes run 1-21 (MILT…YLAS), 24-44 (IVLG…FASF), 49-69 (FAFL…AYFL), 77-97 (ISNF…SALT), and 121-141 (STAP…VIVV).

It belongs to the complex I subunit 6 family.

The protein resides in the mitochondrion membrane. It carries out the reaction a ubiquinone + NADH + 5 H(+)(in) = a ubiquinol + NAD(+) + 4 H(+)(out). Functionally, core subunit of the mitochondrial membrane respiratory chain NADH dehydrogenase (Complex I) that is believed to belong to the minimal assembly required for catalysis. Complex I functions in the transfer of electrons from NADH to the respiratory chain. The immediate electron acceptor for the enzyme is believed to be ubiquinone. This is NADH-ubiquinone oxidoreductase chain 6 (ND6) from Lumbricus terrestris (Common earthworm).